The chain runs to 258 residues: Archaerhodopsin-3 (258 aa).

Positions 1-6 (MDPIAL) are excised as a propeptide. Glutamine 7 carries the pyrrolidone carboxylic acid modification. Residues 7–18 (QAGYDLLGDGRP) are Extracellular-facing. A helical transmembrane segment spans residues 19-40 (ETLWLGIGTLLMLIGTFYFLVR). Topologically, residues 41-49 (GWGVTDKDA) are cytoplasmic. The chain crosses the membrane as a helical span at residues 50 to 71 (REYYAVTILVPGIASAAYLSMF). The Extracellular portion of the chain corresponds to 72 to 89 (FGIGLTEVTVGGEMLDIY). Residues 90–111 (YARYADWLFTTPLLLLDLALLA) traverse the membrane as a helical segment. Topologically, residues 112 to 114 (KVD) are cytoplasmic. Residues 115–137 (RVTIGTLVGVDALMIVTGLIGAL) form a helical membrane-spanning segment. The Extracellular portion of the chain corresponds to 138–141 (SHTA). A helical transmembrane segment spans residues 142-170 (IARYSWWLFSTICMIVVLYFLATSLRSAA). At 171–173 (KER) the chain is on the cytoplasmic side. The chain crosses the membrane as a helical span at residues 174–202 (GPEVASTFNTLTALVLVLWTAYPILWIIG). The Extracellular segment spans residues 203–210 (TEGAGVVG). The helical transmembrane segment at 211–243 (LGIETLLFMVLDVTAKVGFGFILLRSRAILGDT) threads the bilayer. N6-(retinylidene)lysine is present on lysine 226. At 244–258 (EAPEPSAGADVSAAD) the chain is on the cytoplasmic side.

The protein belongs to the archaeal/bacterial/fungal opsin family.

It localises to the cell membrane. Its function is as follows. Light-driven proton pump. This Halorubrum sodomense protein is Archaerhodopsin-3 (aop3).